Here is a 200-residue protein sequence, read N- to C-terminus: Holliday junction branch migration complex subunit RuvA (200 aa).

Residues Met-1–Ile-64 are domain I. Positions Thr-65 to Glu-143 are domain II. The interval Thr-144–Ser-148 is flexible linker. Residues Asp-149 to Ser-200 form a domain III region.

The protein belongs to the RuvA family. Homotetramer. Forms an RuvA(8)-RuvB(12)-Holliday junction (HJ) complex. HJ DNA is sandwiched between 2 RuvA tetramers; dsDNA enters through RuvA and exits via RuvB. An RuvB hexamer assembles on each DNA strand where it exits the tetramer. Each RuvB hexamer is contacted by two RuvA subunits (via domain III) on 2 adjacent RuvB subunits; this complex drives branch migration. In the full resolvosome a probable DNA-RuvA(4)-RuvB(12)-RuvC(2) complex forms which resolves the HJ.

It localises to the cytoplasm. Functionally, the RuvA-RuvB-RuvC complex processes Holliday junction (HJ) DNA during genetic recombination and DNA repair, while the RuvA-RuvB complex plays an important role in the rescue of blocked DNA replication forks via replication fork reversal (RFR). RuvA specifically binds to HJ cruciform DNA, conferring on it an open structure. The RuvB hexamer acts as an ATP-dependent pump, pulling dsDNA into and through the RuvAB complex. HJ branch migration allows RuvC to scan DNA until it finds its consensus sequence, where it cleaves and resolves the cruciform DNA. The chain is Holliday junction branch migration complex subunit RuvA from Chloroherpeton thalassium (strain ATCC 35110 / GB-78).